The sequence spans 158 residues: MYYHIIKSPIYPILLAGDEKGLKHLIFLKDERKAKIPNDWVENKDFFREVSNQLEAYFSGKLKTFDVKLAPQGTEFQKSVWKALCEIPCGETRTYGEIAKRIQNPKAYRAVGLANNRNPIAIIVPCHRVIGANGKLTGYASGLDIKEFLLKLEENNLK.

The Nucleophile; methyl group acceptor role is filled by Cys126.

This sequence belongs to the MGMT family.

The protein localises to the cytoplasm. It catalyses the reaction a 6-O-methyl-2'-deoxyguanosine in DNA + L-cysteinyl-[protein] = S-methyl-L-cysteinyl-[protein] + a 2'-deoxyguanosine in DNA. The enzyme catalyses a 4-O-methyl-thymidine in DNA + L-cysteinyl-[protein] = a thymidine in DNA + S-methyl-L-cysteinyl-[protein]. Its function is as follows. Involved in the cellular defense against the biological effects of O6-methylguanine (O6-MeG) and O4-methylthymine (O4-MeT) in DNA. Repairs the methylated nucleobase in DNA by stoichiometrically transferring the methyl group to a cysteine residue in the enzyme. This is a suicide reaction: the enzyme is irreversibly inactivated. The chain is Methylated-DNA--protein-cysteine methyltransferase from Methanosarcina mazei (strain ATCC BAA-159 / DSM 3647 / Goe1 / Go1 / JCM 11833 / OCM 88) (Methanosarcina frisia).